A 142-amino-acid chain; its full sequence is Transcriptional regulator MraZ (142 aa).

2 consecutive SpoVT-AbrB domains span residues 5–47 and 76–119; these read RFTH…PMDS and ATVV…SPEN.

The protein belongs to the MraZ family. In terms of assembly, forms oligomers.

Its subcellular location is the cytoplasm. It localises to the nucleoid. In Thermomicrobium roseum (strain ATCC 27502 / DSM 5159 / P-2), this protein is Transcriptional regulator MraZ.